The primary structure comprises 338 residues: 5-dehydro-2-deoxygluconokinase (338 aa).

It belongs to the carbohydrate kinase PfkB family.

The catalysed reaction is 5-dehydro-2-deoxy-D-gluconate + ATP = 6-phospho-5-dehydro-2-deoxy-D-gluconate + ADP + H(+). It functions in the pathway polyol metabolism; myo-inositol degradation into acetyl-CoA; acetyl-CoA from myo-inositol: step 5/7. Functionally, catalyzes the phosphorylation of 5-dehydro-2-deoxy-D-gluconate (2-deoxy-5-keto-D-gluconate or DKG) to 6-phospho-5-dehydro-2-deoxy-D-gluconate (DKGP). The polypeptide is 5-dehydro-2-deoxygluconokinase (Mesomycoplasma hyopneumoniae (strain J / ATCC 25934 / NCTC 10110) (Mycoplasma hyopneumoniae)).